We begin with the raw amino-acid sequence, 234 residues long: Carboxy-S-adenosyl-L-methionine synthase (234 aa).

Residues tyrosine 35, 60-62 (GSS), 83-84 (DN), asparagine 124, and arginine 191 each bind S-adenosyl-L-methionine.

Belongs to the class I-like SAM-binding methyltransferase superfamily. Cx-SAM synthase family. In terms of assembly, homodimer.

It catalyses the reaction prephenate + S-adenosyl-L-methionine = carboxy-S-adenosyl-L-methionine + 3-phenylpyruvate + H2O. Functionally, catalyzes the conversion of S-adenosyl-L-methionine (SAM) to carboxy-S-adenosyl-L-methionine (Cx-SAM). The protein is Carboxy-S-adenosyl-L-methionine synthase of Nautilia profundicola (strain ATCC BAA-1463 / DSM 18972 / AmH).